Here is a 1543-residue protein sequence, read N- to C-terminus: MYAAVEHGPVLCSDSNILCLSWKGRVPKSEKEKPVCRRRYYEEGWLATGNGRGVVGVTFTSSHCRRDRSTPQRINFNLRGHNSEVVLVRWNEPYQKLATCDADGGIFVWIQYEGRWSVELVNDRGAQVSDFTWSHDGTQALISYRDGFVLVGSVSGQRHWSSEINLESQITCGIWTPDDQQVLFGTADGQVIVMDCHGRMLAHVLLHESDGVLGMSWNYPIFLVEDSSESDTDSDDYAPPQDGPAAYPIPVQNIKPLLTVSFTSGDISLMNNYDDLSPTVIRSGLKEVVAQWCTQGDLLAVAGMERQTQLGELPNGPLLKSAMVKFYNVRGEHIFTLDTLVQRPIISICWGHRDSRLLMASGPALYVVRVEHRVSSLQLLCQQAIASTLREDKDVSKLTLPPRLCSYLSTAFIPTIKPPIPDPNNMRDFVSYPSAGNERLHCTMKRTEDDPEVGGPCYTLYLEYLGGLVPILKGRRISKLRPEFVIMDPRTDSKPDEIYGNSLISTVIDSCNCSDSSDIELSDDWAAKKSPKISRASKSPKLPRISIEARKSPKLPRAAQELSRSPRLPLRKPSVGSPSLTRREFPFEDITQHNYLAQVTSNIWGTKFKIVGLAAFLPTNLGAVIYKTSLLHLQPRQMTIYLPEVRKISMDYINLPVFNPNVFSEDEDDLPVTGASGVPENSPPCTVNIPIAPIHSSAQAMSPTQSIGLVQSLLANQNVQLDVLTNQTTAVGTAEHAGDSATQYPVSNRYSNPGQVIFGSVEMGRIIQNPPPLSLPPPPQGPMQLSTVGHGDRDHEHLQKSAKALRPTPQLAAEGDAVVFSAPQEVQVTKINPPPPYPGTIPAAPTTAAPPPPLPPPQPPVDVCLKKGDFSLYPTSVHYQTPLGYERITTFDSSGNVEEVCRPRTRMLCSQNTYTLPGPGSSATLRLTATEKKVPQPCSSATLNRLTVPRYSIPTGDPPPYPEIASQLAQGRGAAQRSDNSLIHATLRRNNREATLKMAQLADSPRAPLQPLAKSKGGPGGVVTQLPARPPPALYTCSQCSGTGPSSQPGASLAHTASASPLASQSSYSLLSPPDSARDRTDYVNSAFTEDEALSQHCQLEKPLRHPPLPEAAVTLKRPPPYQWDPMLGEDVWVPQERTAQTSGPNPLKLSSLMLSQGQHLDVSRLPFISPKSPASPTATFQTGYGMGVPYPGSYNNPPLPGVQAPCSPKDALSPTQFAQQEPAVVLQPLYPPSLSYCTLPPMYPGSSTCSSLQLPPVALHPWSSYSACPPMQNPQGTLPPKPHLVVEKPLVSPPPADLQSHLGTEVMVETADNFQEVLSLTESPVPQRTEKFGKKNRKRLDSRAEEGSVQAITEGKVKKEARTLSDFNSLISSPHLGREKKKVKSQKDQLKSKKLNKTNEFQDSSESEPELFISGDELMNQSQGSRKGWKSKRSPRAAGELEEAKCRRASEKEDGRLGSQGFVYVMANKQPLWNEATQVYQLDFGGRVTQESAKNFQIELEGRQVMQFGRIDGSAYILDFQYPFSAVQAFAVALANVTQRLK.

7 WD repeats span residues 6–72 (EHGP…STPQ), 73–115 (RINF…YEGR), 116–158 (WSVE…SGQR), 159–237 (HWSS…SDDY), 238–276 (APPQ…YDDL), 277–334 (SPTV…GEHI), and 335–372 (FTLD…RVEH). Residues 364–414 (ALYVVRVEHRVSSLQLLCQQAIASTLREDKDVSKLTLPPRLCSYLSTAFIP) enclose the SOCS box domain. Disordered stretches follow at residues 530–577 (SPKI…SVGS) and 829–850 (TKIN…TAAP). At S577 the chain carries Phosphoserine. Asymmetric dimethylarginine is present on residues R945 and R950. Disordered regions lie at residues 1004–1058 (SPRA…HTAS), 1326–1355 (VPQR…AITE), and 1367–1453 (DFNS…ASEK). The segment covering 1036–1050 (TCSQCSGTGPSSQPG) has biased composition (polar residues). Positions 1329–1347 (RTEKFGKKNRKRLDSRAEE) are enriched in basic and acidic residues. Phosphoserine is present on residues S1343 and S1374. Positions 1443–1453 (EEAKCRRASEK) are enriched in basic and acidic residues. Positions 1466-1543 (VMANKQPLWN…ALANVTQRLK (78 aa)) are TUB.

This sequence belongs to the TUB family. As to expression, expressed mainly in the brain, skeletal muscle, testis and kidney.

Its subcellular location is the cytoplasm. The protein operates within protein modification; protein ubiquitination. In terms of biological role, may be a substrate-recognition component of a SCF-like ECS (Elongin-Cullin-SOCS-box protein) E3 ubiquitin ligase complex which mediates the ubiquitination and subsequent proteasomal degradation of target proteins. The protein is Tubby-related protein 4 (TULP4) of Homo sapiens (Human).